Reading from the N-terminus, the 226-residue chain is Protein-L-isoaspartate O-methyltransferase (226 aa).

The active site involves serine 66.

Belongs to the methyltransferase superfamily. L-isoaspartyl/D-aspartyl protein methyltransferase family.

It localises to the cytoplasm. It catalyses the reaction [protein]-L-isoaspartate + S-adenosyl-L-methionine = [protein]-L-isoaspartate alpha-methyl ester + S-adenosyl-L-homocysteine. Its function is as follows. Catalyzes the methyl esterification of L-isoaspartyl residues in peptides and proteins that result from spontaneous decomposition of normal L-aspartyl and L-asparaginyl residues. It plays a role in the repair and/or degradation of damaged proteins. The chain is Protein-L-isoaspartate O-methyltransferase from Methanopyrus kandleri (strain AV19 / DSM 6324 / JCM 9639 / NBRC 100938).